The chain runs to 248 residues: Probable transcriptional regulatory protein BH14810 (248 aa).

This sequence belongs to the TACO1 family.

The protein resides in the cytoplasm. The polypeptide is Probable transcriptional regulatory protein BH14810 (Bartonella henselae (strain ATCC 49882 / DSM 28221 / CCUG 30454 / Houston 1) (Rochalimaea henselae)).